We begin with the raw amino-acid sequence, 341 residues long: S-adenosylmethionine:tRNA ribosyltransferase-isomerase (341 aa).

Belongs to the QueA family. Monomer.

Its subcellular location is the cytoplasm. It carries out the reaction 7-aminomethyl-7-carbaguanosine(34) in tRNA + S-adenosyl-L-methionine = epoxyqueuosine(34) in tRNA + adenine + L-methionine + 2 H(+). The protein operates within tRNA modification; tRNA-queuosine biosynthesis. Functionally, transfers and isomerizes the ribose moiety from AdoMet to the 7-aminomethyl group of 7-deazaguanine (preQ1-tRNA) to give epoxyqueuosine (oQ-tRNA). The protein is S-adenosylmethionine:tRNA ribosyltransferase-isomerase of Trichlorobacter lovleyi (strain ATCC BAA-1151 / DSM 17278 / SZ) (Geobacter lovleyi).